The following is a 161-amino-acid chain: Anaerobic nitrite reductase HB2 (161 aa).

Residues Val-5–Lys-154 form the Globin domain. A Homodimerization motif is present at residues Glu-38–Ala-42. 4 residues coordinate heme b: Ser-48, Lys-62, His-66, and His-101. A Homodimerization motif is present at residues Asp-108 to Arg-120.

It belongs to the plant globin family. In terms of assembly, homodimer. Heme b is required as a cofactor.

Its subcellular location is the cytoplasm. The protein localises to the nucleus. The enzyme catalyses Fe(III)-heme b-[protein] + nitric oxide + H2O = Fe(II)-heme b-[protein] + nitrite + 2 H(+). Phytoglobin that reduces nitrite to nitric oxide (NO) under anoxic conditions (e.g. during flooding or in waterlogged soil). May not function as an oxygen storage or transport protein. Has an unusually high affinity for O(2) through an hexacoordinate heme iron because of a very low dissociation constant. In Brassica napus (Rape), this protein is Anaerobic nitrite reductase HB2.